Here is a 295-residue protein sequence, read N- to C-terminus: Septu protein PtuB (295 aa).

In terms of biological role, component of antiviral defense system Septu type II, composed of PtuA and PtuB. Expression of Septu type II in B.subtilis (strain BEST7003) confers resistance to phages SBSphiC and SpBeta. May be a nuclease. In Bacillus mycoides (strain KBAB4) (Bacillus weihenstephanensis), this protein is Septu protein PtuB.